Reading from the N-terminus, the 191-residue chain is Thymidine kinase (191 aa).

ATP is bound by residues 9-16 (GSMNSGKT) and 85-88 (DESQ). Glutamate 86 functions as the Proton acceptor in the catalytic mechanism. Residues cysteine 143, cysteine 146, cysteine 181, and cysteine 184 each coordinate Zn(2+).

The protein belongs to the thymidine kinase family. Homotetramer.

It is found in the cytoplasm. The catalysed reaction is thymidine + ATP = dTMP + ADP + H(+). The polypeptide is Thymidine kinase (Listeria monocytogenes serotype 4b (strain F2365)).